The primary structure comprises 546 residues: Calcitonin receptor-like protein 1 (546 aa).

The Cytoplasmic segment spans residues 1–171 (MADATSPFNV…EVARNARKLE (171 aa)). Residues 172–192 (FVGLGLSLVSLILAISIFSYF) form a helical membrane-spanning segment. The Extracellular segment spans residues 193–205 (RRLRVFRNLLHLH). The helical transmembrane segment at 206–226 (LMIAMLMVVILRLVLYIDLIF) threads the bilayer. Topologically, residues 227–251 (TGENGPHTNSAEGKTINTMPIVCEG) are cytoplasmic. The chain crosses the membrane as a helical span at residues 252 to 272 (MFFFLEYFKTVTFCWMFLEGI). Residues 273–292 (YLNNQIVFGFFNSEPKLLPY) lie on the Extracellular side of the membrane. A helical transmembrane segment spans residues 293 to 313 (FIAGYGIPLVHTMLWLLVVLI). The Cytoplasmic segment spans residues 314–333 (KKDFKVERCLGSYYLEPEFW). Residues 334-354 (ILDGPRMAELVINLFFICNVI) traverse the membrane as a helical segment. The Extracellular segment spans residues 355-377 (RVLYSKVRESNNTSEAGLKKSVK). Asn-365 and Asn-366 each carry an N-linked (GlcNAc...) asparagine glycan. A helical membrane pass occupies residues 378 to 398 (AAMMLLPLLGVPNIMQTIPFA). Residues 399–403 (PTRDN) lie on the Cytoplasmic side of the membrane. Residues 404-424 (IMVFAVWTYTASFTYMYQGLM) traverse the membrane as a helical segment. Over 425–546 (VASIYCFTNK…EGSNRSTKSP (122 aa)) the chain is Extracellular. N-linked (GlcNAc...) asparagine glycosylation is found at Asn-472 and Asn-476. Residues 472–546 (NGTANASAPQ…EGSNRSTKSP (75 aa)) are disordered. Over residues 473–485 (GTANASAPQTNNA) the composition is skewed to polar residues. Positions 500–520 (KGSDDSTTKLMKDAVMEEEKN) are enriched in basic and acidic residues. Residue Asn-540 is glycosylated (N-linked (GlcNAc...) asparagine).

It belongs to the G-protein coupled receptor 2 family. Expression was observed in the mechanosensory neuron pairs PLM, ALM, FLP, OLQD, and OLQV, the chemosensory neurons PHA, PHB, RMEV, the ring motor neurons RMED, and the pharyngeal interneuron pair I1. Expression in sensory neurons PHA, PQR and URY are responsible for mate searching behavior. Expressed in AIY, RIM, RIA, and other neurons.

Its subcellular location is the cell membrane. In terms of biological role, G-protein coupled receptor for PDF neuropeptides. Plays a role in responses to environmental signals, including chemicals and touch, and in modulating locomotory behaviors. Capable of transducing signals via an adenylate cyclase acy-1 cAMP-dependent pathway. Required to regulate the sex-specific expression of TGFbeta-like daf-7 in the ASJ chemosensory neurons, perhaps acting via acy-1. Involved in modulating mate searching behavior independent of nutritional status. In the presence of food, plays a role in initiating and extending exploratory roaming behavior, perhaps acting in AIY, RIM, RIA, and other neurons, in opposition to 5-hydroxytryptamine (serotonin) signaling. Involved in mediating arousal from the sleep-like state called lethargus, which occurs during molting between larval and adult stages, in part by regulating touch sensitivity. May play a role in circadian rhythms of locomotor activity. Functionally, G-protein coupled receptor which is activated by neuropeptides PDF-1 and PDF-2. Probably acts through the G-alpha(s) type of G proteins to elevate cAMP levels. Its function is as follows. G-protein coupled receptor which is activated by neuropeptides PDF-1 and PDF-2; however, activation is lower compared to isoforms a and b. Probably inhibits cAMP levels through the G-alpha(i/o) type of G proteins. The sequence is that of Calcitonin receptor-like protein 1 (pdfr-1) from Caenorhabditis elegans.